Here is a 433-residue protein sequence, read N- to C-terminus: ATP-dependent protease ATPase subunit HslU (433 aa).

Residues Val-18, 60–65 (GVGKTE), Asp-246, Glu-311, and Arg-383 contribute to the ATP site.

The protein belongs to the ClpX chaperone family. HslU subfamily. A double ring-shaped homohexamer of HslV is capped on each side by a ring-shaped HslU homohexamer. The assembly of the HslU/HslV complex is dependent on binding of ATP.

It localises to the cytoplasm. Its function is as follows. ATPase subunit of a proteasome-like degradation complex; this subunit has chaperone activity. The binding of ATP and its subsequent hydrolysis by HslU are essential for unfolding of protein substrates subsequently hydrolyzed by HslV. HslU recognizes the N-terminal part of its protein substrates and unfolds these before they are guided to HslV for hydrolysis. The chain is ATP-dependent protease ATPase subunit HslU from Nitrobacter hamburgensis (strain DSM 10229 / NCIMB 13809 / X14).